The following is a 42-amino-acid chain: Delta-hexatoxin-Hv1b (42 aa).

Intrachain disulfides connect Cys1-Cys15, Cys8-Cys20, Cys14-Cys31, and Cys16-Cys42.

Belongs to the neurotoxin 06 (delta-actx) family. Expressed by the venom gland.

It is found in the secreted. Its function is as follows. Lethal neurotoxin. Slows the inactivation of tetrodotoxin-sensitive voltage-gated sodium channels (Nav) by binding to site 3 of the channel, resulting in repetitive firing in autonomic and motor nerve fibers. The sequence is that of Delta-hexatoxin-Hv1b from Hadronyche versuta (Blue mountains funnel-web spider).